Reading from the N-terminus, the 497-residue chain is Vacuolar fusion protein CCZ1 homolog B (497 aa).

Residues Gly244–Thr284 form a disordered region.

It belongs to the CCZ1 family. As to quaternary structure, interacts with MON1.

The protein localises to the endosome. The protein resides in the prevacuolar compartment. Its function is as follows. Plays an important role in membrane trafficking through the secretory apparatus. In complex with MON1, acts as a guanine exchange factor (GEF) for RABG3F of the RAB7 protein family. Promotes the exchange of GDP to GTP, converting RABG3F from an inactive GDP-bound form into an active GTP-bound form. The RABG3F active form is involved in protein trafficking from prevacuolar compartments (PVCs) to vacuoles. May serve as a linker between Rab5 and Rab7 protein families in PVCs and mediate PVC maturation. The chain is Vacuolar fusion protein CCZ1 homolog B from Arabidopsis thaliana (Mouse-ear cress).